A 110-amino-acid polypeptide reads, in one-letter code: Tyrosine-protein phosphatase 3 (110 aa).

Positions 1-110 (QKCATIVMVT…NPPHSGPIVV (110 aa)) constitute a Tyrosine-protein phosphatase domain. Residue Asp80 coordinates substrate.

The protein belongs to the protein-tyrosine phosphatase family.

It carries out the reaction O-phospho-L-tyrosyl-[protein] + H2O = L-tyrosyl-[protein] + phosphate. The polypeptide is Tyrosine-protein phosphatase 3 (STY-3) (Styela plicata (Wrinkled sea squirt)).